The chain runs to 101 residues: Small ribosomal subunit protein bS6 (101 aa).

Belongs to the bacterial ribosomal protein bS6 family.

Functionally, binds together with bS18 to 16S ribosomal RNA. The chain is Small ribosomal subunit protein bS6 from Nitratidesulfovibrio vulgaris (strain DSM 19637 / Miyazaki F) (Desulfovibrio vulgaris).